A 176-amino-acid chain; its full sequence is Large ribosomal subunit protein bL12m (176 aa).

The protein belongs to the bacterial ribosomal protein bL12 family. Component of the mitochondrial large ribosomal subunit (mt-LSU). Mature N.crassa 74S mitochondrial ribosomes consist of a small (37S) and a large (54S) subunit. The 37S small subunit contains a 16S ribosomal RNA (16S mt-rRNA) and 32 different proteins. The 54S large subunit contains a 23S rRNA (23S mt-rRNA) and 42 different proteins.

The protein localises to the mitochondrion. Its function is as follows. Component of the mitochondrial ribosome (mitoribosome), a dedicated translation machinery responsible for the synthesis of mitochondrial genome-encoded proteins, including at least some of the essential transmembrane subunits of the mitochondrial respiratory chain. The mitoribosomes are attached to the mitochondrial inner membrane and translation products are cotranslationally integrated into the membrane. The chain is Large ribosomal subunit protein bL12m (mrpl12) from Neurospora crassa (strain ATCC 24698 / 74-OR23-1A / CBS 708.71 / DSM 1257 / FGSC 987).